A 348-amino-acid polypeptide reads, in one-letter code: Fructose-1,6-bisphosphatase class 1 (348 aa).

Residues Glu92, Asp111, Leu113, and Asp114 each coordinate Mg(2+). Residues 114–117 (DGSS) and Asn204 contribute to the substrate site. Mg(2+) is bound at residue Glu276.

Belongs to the FBPase class 1 family. Homotetramer. It depends on Mg(2+) as a cofactor.

It localises to the cytoplasm. It carries out the reaction beta-D-fructose 1,6-bisphosphate + H2O = beta-D-fructose 6-phosphate + phosphate. It participates in carbohydrate biosynthesis; gluconeogenesis. The polypeptide is Fructose-1,6-bisphosphatase class 1 (Methylorubrum extorquens (strain CM4 / NCIMB 13688) (Methylobacterium extorquens)).